We begin with the raw amino-acid sequence, 519 residues long: Aspartokinase (519 aa).

The residue at position 326 (S326) is a Phosphoserine. T328 carries the post-translational modification Phosphothreonine. One can recognise an ACT domain in the interval 436 to 518 (LVGKHMRNTT…MLVEKPWLYS (83 aa)).

The protein belongs to the aspartokinase family.

The catalysed reaction is L-aspartate + ATP = 4-phospho-L-aspartate + ADP. It functions in the pathway amino-acid biosynthesis; L-methionine biosynthesis via de novo pathway; L-homoserine from L-aspartate: step 1/3. Its pathway is amino-acid biosynthesis; L-threonine biosynthesis; L-threonine from L-aspartate: step 1/5. Functionally, phosphorylates aspartate, the first step in the biosynthesis of amino acids that derive from aspartate (the aspartate family of amino acids), including methioinine and threonine, the latter of which is a precursor to isoleucine. The chain is Aspartokinase from Schizosaccharomyces pombe (strain 972 / ATCC 24843) (Fission yeast).